A 183-amino-acid chain; its full sequence is NADH-quinone oxidoreductase subunit I (183 aa).

4Fe-4S ferredoxin-type domains lie at 71 to 100 (KRDE…MKAA) and 117 to 146 (EIYE…LTTS). Positions 80, 83, 86, 90, 126, 129, 132, and 136 each coordinate [4Fe-4S] cluster.

This sequence belongs to the complex I 23 kDa subunit family. As to quaternary structure, NDH-1 is composed of 14 different subunits. Subunits NuoA, H, J, K, L, M, N constitute the membrane sector of the complex. [4Fe-4S] cluster serves as cofactor.

The protein resides in the cell inner membrane. It carries out the reaction a quinone + NADH + 5 H(+)(in) = a quinol + NAD(+) + 4 H(+)(out). In terms of biological role, NDH-1 shuttles electrons from NADH, via FMN and iron-sulfur (Fe-S) centers, to quinones in the respiratory chain. The immediate electron acceptor for the enzyme in this species is believed to be ubiquinone. Couples the redox reaction to proton translocation (for every two electrons transferred, four hydrogen ions are translocated across the cytoplasmic membrane), and thus conserves the redox energy in a proton gradient. The protein is NADH-quinone oxidoreductase subunit I of Flavobacterium psychrophilum (strain ATCC 49511 / DSM 21280 / CIP 103535 / JIP02/86).